The primary structure comprises 738 residues: Melanotransferrin (738 aa).

Residues 1-19 form the signal peptide; that stretch reads MRGPSGALWLLLALRTVLG. The tract at residues 20–30 is antigenic epitope; it reads GMEVRWCATSD. Transferrin-like domains follow at residues 23-357 and 366-706; these read VRWC…GLLC and LRWC…GMSS. 2 disulfides stabilise this stretch: Cys-26/Cys-63 and Cys-36/Cys-54. N-linked (GlcNAc...) asparagine glycosylation is present at Asn-38. Fe(3+) contacts are provided by Asp-78 and Tyr-107. 4 disulfide bridges follow: Cys-130-Cys-216, Cys-172-Cys-189, Cys-186-Cys-199, and Cys-257-Cys-271. Thr-132 lines the hydrogencarbonate pocket. N-linked (GlcNAc...) asparagine glycosylation is present at Asn-135. Hydrogencarbonate is bound by residues Arg-136, Val-138, and Gly-139. Fe(3+) is bound at residue Tyr-210. Fe(3+)-binding residues include His-279, Ser-421, and Tyr-451. Ser-462 carries the post-translational modification Phosphoserine; by FAM20C. The N-linked (GlcNAc...) asparagine glycan is linked to Asn-515. Fe(3+) contacts are provided by Tyr-556 and His-625. The GPI-anchor amidated cysteine moiety is linked to residue Cys-709. The propeptide at 710–738 is removed in mature form; it reads SGAAAPAPGAPLLPLLLPALAARLLPPAL.

Belongs to the transferrin family. As to expression, found predominantly in human melanomas and in certain fetal tissues; also found in liver, epithelium, umbilical chord, placenta and sweat gland ducts.

It is found in the cell membrane. Functionally, involved in iron cellular uptake. Seems to be internalized and then recycled back to the cell membrane. Binds a single atom of iron per subunit. Could also bind zinc. This chain is Melanotransferrin, found in Homo sapiens (Human).